Consider the following 365-residue polypeptide: Dehydroprecondylocarpine acetate synthase (365 aa).

Zn(2+) contacts are provided by C105, C108, C111, and C119. N142 and N147 each carry an N-linked (GlcNAc...) asparagine glycan. Residues L194, G196, L197, S216, T217, T218, K221, L279, A281, S303, A305, and R350 each coordinate NADP(+).

Belongs to the zinc-containing alcohol dehydrogenase family. Homodimer. Interaction with catharanthine synthase (CS) and tabersonine synthase (TS). Zn(2+) is required as a cofactor.

Its subcellular location is the cytoplasm. The protein resides in the cytosol. The catalysed reaction is dihydroprecondylocarpine acetate + NADP(+) = precondylocarpine acetate + NADPH + H(+). It functions in the pathway alkaloid biosynthesis. Component of the seco-iridoid and derivatives monoterpenoid indole alkaloids (MIAs, e.g. vinblastine, catharanthine, tabersonine, vincadifformine, vindoline, vincristine, quinine and strychnine) biosynthesis pathway. Catalyzes the non-canonical 1,4-reduction of an alpha,beta-unsaturated iminium moiety; by contrast with the classic alcohol dehydrogenase mechanism, this reaction does not require a catalytic zinc or proton relay. Converts precondylocarpine acetate to dihydroprecondylocarpine acetate, that is spontaneously converted into dehydrosecodine intermediate, precursor of angryline. May also trigger the non-stereoselective 1,4-reduction reaction at C15 of dehydrosecodine leading to the production of secodine, a precursor of vincadifformine. The sequence is that of Dehydroprecondylocarpine acetate synthase from Catharanthus roseus (Madagascar periwinkle).